Consider the following 371-residue polypeptide: Ferredoxin--NADP reductase, apicoplast (371 aa).

Residues M1 to C18 constitute an apicoplast transit peptide. FAD is bound by residues K68, A155–S159, A172–E179, Y192–S194, and T235. The FAD-binding FR-type domain occupies K68–P218. K174 contributes to the NADP(+) binding site. Residues V272–Y273, S302, Y313–Q315, and H341–S343 each bind NADP(+). FAD contacts are provided by K342 and Y371.

This sequence belongs to the ferredoxin--NADP reductase type 1 family. As to quaternary structure, monomer. Homodimer; disulfide linked. NADP binding accelerates formation of an inactive, disulfide-linked homodimer when the protein is exposed to air for 24 hours or more (in vitro); the physiological relevance of this is uncertain. Requires FAD as cofactor.

It is found in the plastid. The protein resides in the apicoplast. It catalyses the reaction 2 reduced [2Fe-2S]-[ferredoxin] + NADP(+) + H(+) = 2 oxidized [2Fe-2S]-[ferredoxin] + NADPH. May play a role in the terminal step of the DOXP/MEP pathway for isoprenoid precursor biosynthesis. The sequence is that of Ferredoxin--NADP reductase, apicoplast from Plasmodium falciparum (isolate 3D7).